A 311-amino-acid polypeptide reads, in one-letter code: Immune-associated nucleotide-binding protein 7 (311 aa).

The region spanning 14–222 is the AIG1-type G domain; sequence KQAENIVLVG…YTDDTYHMIK (209 aa). The interval 23-30 is G1; that stretch reads GRTGNGKS. GTP contacts are provided by residues 23 to 31 and serine 44; that span reads GRTGNGKSA. Residues 50–54 form a G2 region; that stretch reads GVTMK. Residues 72-75 form a G3 region; it reads DTPG. The G4 stretch occupies residues 142-145; it reads TGGD. A G5 region spans residues 181–183; it reads DNK. A GTP-binding site is contributed by asparagine 182. The stretch at 218–295 forms a coiled coil; that stretch reads YHMIKEESEK…TQENNELNLA (78 aa).

Belongs to the TRAFAC class TrmE-Era-EngA-EngB-Septin-like GTPase superfamily. AIG1/Toc34/Toc159-like paraseptin GTPase family. IAN subfamily. In terms of tissue distribution, ubiquitous.

This chain is Immune-associated nucleotide-binding protein 7, found in Arabidopsis thaliana (Mouse-ear cress).